A 255-amino-acid polypeptide reads, in one-letter code: Hemin import ATP-binding protein HmuV (255 aa).

Residues 2–238 (LQVEGLYLCR…AALKAVYGID (237 aa)) form the ABC transporter domain. 34-41 (GPNGAGKS) contributes to the ATP binding site.

It belongs to the ABC transporter superfamily. Heme (hemin) importer (TC 3.A.1.14.5) family. In terms of assembly, the complex is composed of two ATP-binding proteins (HmuV), two transmembrane proteins (HmuU) and a solute-binding protein (HmuT).

Its subcellular location is the cell inner membrane. Its function is as follows. Part of the ABC transporter complex HmuTUV involved in hemin import. Responsible for energy coupling to the transport system. This chain is Hemin import ATP-binding protein HmuV, found in Pseudomonas putida (strain ATCC 47054 / DSM 6125 / CFBP 8728 / NCIMB 11950 / KT2440).